A 464-amino-acid chain; its full sequence is Fumarate hydratase class II (464 aa).

Substrate-binding positions include 97 to 99 (SGT), 128 to 131 (HPND), 138 to 140 (SSN), and threonine 186. Histidine 187 functions as the Proton donor/acceptor in the catalytic mechanism. Serine 317 is an active-site residue. Residues serine 318 and 323–325 (KVN) contribute to the substrate site.

This sequence belongs to the class-II fumarase/aspartase family. Fumarase subfamily. In terms of assembly, homotetramer.

The protein localises to the cytoplasm. The enzyme catalyses (S)-malate = fumarate + H2O. Its pathway is carbohydrate metabolism; tricarboxylic acid cycle; (S)-malate from fumarate: step 1/1. Functionally, involved in the TCA cycle. Catalyzes the stereospecific interconversion of fumarate to L-malate. The chain is Fumarate hydratase class II from Leptospira interrogans serogroup Icterohaemorrhagiae serovar copenhageni (strain Fiocruz L1-130).